A 193-amino-acid polypeptide reads, in one-letter code: Peptidyl-tRNA hydrolase (193 aa).

Tyr-16 contributes to the tRNA binding site. His-21 serves as the catalytic Proton acceptor. Positions 66, 68, and 114 each coordinate tRNA.

Belongs to the PTH family. As to quaternary structure, monomer.

The protein resides in the cytoplasm. The enzyme catalyses an N-acyl-L-alpha-aminoacyl-tRNA + H2O = an N-acyl-L-amino acid + a tRNA + H(+). In terms of biological role, hydrolyzes ribosome-free peptidyl-tRNAs (with 1 or more amino acids incorporated), which drop off the ribosome during protein synthesis, or as a result of ribosome stalling. Catalyzes the release of premature peptidyl moieties from peptidyl-tRNA molecules trapped in stalled 50S ribosomal subunits, and thus maintains levels of free tRNAs and 50S ribosomes. This chain is Peptidyl-tRNA hydrolase, found in Geobacter sulfurreducens (strain ATCC 51573 / DSM 12127 / PCA).